Reading from the N-terminus, the 955-residue chain is 2-oxoglutarate dehydrogenase E1 component (955 aa).

Belongs to the alpha-ketoglutarate dehydrogenase family. In terms of assembly, homodimer. Part of the 2-oxoglutarate dehydrogenase (OGDH) complex composed of E1 (2-oxoglutarate dehydrogenase), E2 (dihydrolipoamide succinyltransferase) and E3 (dihydrolipoamide dehydrogenase); the complex contains multiple copies of the three enzymatic components (E1, E2 and E3). The cofactor is thiamine diphosphate.

The catalysed reaction is N(6)-[(R)-lipoyl]-L-lysyl-[protein] + 2-oxoglutarate + H(+) = N(6)-[(R)-S(8)-succinyldihydrolipoyl]-L-lysyl-[protein] + CO2. In terms of biological role, E1 component of the 2-oxoglutarate dehydrogenase (OGDH) complex which catalyzes the decarboxylation of 2-oxoglutarate, the first step in the conversion of 2-oxoglutarate to succinyl-CoA and CO(2). In Bacillus cereus (strain ATCC 14579 / DSM 31 / CCUG 7414 / JCM 2152 / NBRC 15305 / NCIMB 9373 / NCTC 2599 / NRRL B-3711), this protein is 2-oxoglutarate dehydrogenase E1 component.